Reading from the N-terminus, the 132-residue chain is Large-conductance mechanosensitive channel (132 aa).

3 helical membrane passes run 14-34 (VVDL…VSSL), 38-58 (IITP…LHFG), and 67-87 (GNFI…FMFV).

It belongs to the MscL family. As to quaternary structure, homopentamer.

The protein resides in the cell membrane. Channel that opens in response to stretch forces in the membrane lipid bilayer. May participate in the regulation of osmotic pressure changes within the cell. The protein is Large-conductance mechanosensitive channel of Bacillus cereus (strain B4264).